Consider the following 554-residue polypeptide: Beta-eudesmol synthase (554 aa).

Mg(2+)-binding residues include D305, D309, and E456. The short motif at 305-309 is the DDXXD motif element; the sequence is DDIYD.

It belongs to the terpene synthase family. The cofactor is Mg(2+). Mn(2+) serves as cofactor. As to expression, expressed in rhizomes. Detected in stems, but not in leaves.

It is found in the cytoplasm. The catalysed reaction is (2E,6E)-farnesyl diphosphate + H2O = beta-eudesmol + diphosphate. The enzyme catalyses (2E,6E)-farnesyl diphosphate + H2O = 10-epi-gamma-eudesmol + diphosphate. It carries out the reaction (2E,6E)-farnesyl diphosphate + H2O = alpha-eudesmol + diphosphate. The protein operates within secondary metabolite biosynthesis; terpenoid biosynthesis. In terms of biological role, involved in the biosynthesis of beta-eudesmol, a sesquiterpene with antifungal activity and responsible for resistance of plants to ant attack. Produces mainly beta-eudesmol, but also smaller amounts of 10-epi-gamma-eudesmol, alpha-eudesmol and aristolene. In Zingiber zerumbet (Shampoo ginger), this protein is Beta-eudesmol synthase (ZSS2).